A 232-amino-acid polypeptide reads, in one-letter code: Ribonuclease 3 (232 aa).

Positions 10-135 (ALKIYEATGY…LIGAMYMDGG (126 aa)) constitute an RNase III domain. Glu-48 is a Mg(2+) binding site. Residue Asp-52 is part of the active site. Residues Asn-121 and Glu-124 each contribute to the Mg(2+) site. Glu-124 is an active-site residue. Residues 161-230 (DPKTALQEWV…AKLMLKKITE (70 aa)) enclose the DRBM domain.

This sequence belongs to the ribonuclease III family. In terms of assembly, homodimer. Mg(2+) serves as cofactor.

It localises to the cytoplasm. It catalyses the reaction Endonucleolytic cleavage to 5'-phosphomonoester.. Digests double-stranded RNA. Involved in the processing of primary rRNA transcript to yield the immediate precursors to the large and small rRNAs (23S and 16S). Processes some mRNAs, and tRNAs when they are encoded in the rRNA operon. Processes pre-crRNA and tracrRNA of type II CRISPR loci if present in the organism. The polypeptide is Ribonuclease 3 (Anaplasma marginale (strain Florida)).